We begin with the raw amino-acid sequence, 318 residues long: Cell growth regulator with EF hand domain protein 1 (318 aa).

Positions 1-19 (MLPLTMTVLILLLLPTGQA) are cleaved as a signal peptide. EF-hand domains are found at residues 69 to 104 (SREQ…ALAP) and 114 to 149 (PVIL…ALRH). Ca(2+) is bound by residues Asp82, Asp84, Ser86, Gln88, Glu93, Asp127, Asn129, Asp131, and Glu138. Residues 177 to 318 (LRQETQEAPG…HIVQVENDEI (142 aa)) are disordered. Basic and acidic residues-rich tracts occupy residues 186–202 (GPRE…RESL) and 223–233 (GEAEGQAEAKG). 3 consecutive repeat copies span residues 219 to 235 (PGPR…KGDA), 236 to 252 (PGPR…EGDA), and 253 to 269 (PGPR…EGDA). The segment at 219 to 286 (PGPRGEAEGQ…GGQAEARENG (68 aa)) is 4 X 17 AA approximate tandem repeats of P-G-P-R-G-E-A-G-G-Q-A-E-A-[KR]-G-D-A. Positions 235 to 272 (APGPRGEAGGQAEAEGDAPGPRGEAGGQAEAEGDAPGP) are enriched in low complexity. The 4; approximate repeat unit spans residues 270 to 286 (PGPRGEAGGQAEARENG). The span at 281–293 (EARENGEEAKELP) shows a compositional bias: basic and acidic residues.

Post-translationally, probably digested extracellularly by an unknown serine protease generating extremely hydrophobic bioactive peptides.

It is found in the secreted. Functionally, mediates cell-cell adhesion in a calcium-dependent manner. Able to inhibit growth in several cell lines. The sequence is that of Cell growth regulator with EF hand domain protein 1 from Homo sapiens (Human).